The primary structure comprises 729 residues: Fatty acid oxidation complex subunit alpha (729 aa).

The tract at residues 1-189 is enoyl-CoA hydratase/isomerase; the sequence is MLYKGDTLYL…KIGLVDGVVK (189 aa). Residue Asp-296 coordinates substrate. The interval 311-729 is 3-hydroxyacyl-CoA dehydrogenase; it reads ETPKQAAVLG…ARPVGDLKTA (419 aa). Residues Met-324, Asp-343, 400–402, Lys-407, and Ser-429 each bind NAD(+); that span reads IVE. The For 3-hydroxyacyl-CoA dehydrogenase activity role is filled by His-450. Asn-453 is a binding site for NAD(+). Substrate-binding residues include Asn-500 and Tyr-660. Residues 708 to 729 are disordered; sequence RHNEPYYPPVEPARPVGDLKTA.

In the N-terminal section; belongs to the enoyl-CoA hydratase/isomerase family. This sequence in the C-terminal section; belongs to the 3-hydroxyacyl-CoA dehydrogenase family. In terms of assembly, heterotetramer of two alpha chains (FadB) and two beta chains (FadA).

The enzyme catalyses a (3S)-3-hydroxyacyl-CoA + NAD(+) = a 3-oxoacyl-CoA + NADH + H(+). It catalyses the reaction a (3S)-3-hydroxyacyl-CoA = a (2E)-enoyl-CoA + H2O. The catalysed reaction is a 4-saturated-(3S)-3-hydroxyacyl-CoA = a (3E)-enoyl-CoA + H2O. It carries out the reaction (3S)-3-hydroxybutanoyl-CoA = (3R)-3-hydroxybutanoyl-CoA. The enzyme catalyses a (3Z)-enoyl-CoA = a 4-saturated (2E)-enoyl-CoA. It catalyses the reaction a (3E)-enoyl-CoA = a 4-saturated (2E)-enoyl-CoA. The protein operates within lipid metabolism; fatty acid beta-oxidation. Its function is as follows. Involved in the aerobic and anaerobic degradation of long-chain fatty acids via beta-oxidation cycle. Catalyzes the formation of 3-oxoacyl-CoA from enoyl-CoA via L-3-hydroxyacyl-CoA. It can also use D-3-hydroxyacyl-CoA and cis-3-enoyl-CoA as substrate. This is Fatty acid oxidation complex subunit alpha from Escherichia coli O157:H7.